Consider the following 580-residue polypeptide: Arginine--tRNA ligase (580 aa).

Residues 137–147 (ANPTGPLHIGH) carry the 'HIGH' region motif.

The protein belongs to the class-I aminoacyl-tRNA synthetase family. In terms of assembly, monomer.

It is found in the cytoplasm. It catalyses the reaction tRNA(Arg) + L-arginine + ATP = L-arginyl-tRNA(Arg) + AMP + diphosphate. The sequence is that of Arginine--tRNA ligase from Anaplasma phagocytophilum (strain HZ).